The sequence spans 422 residues: Dihydroorotase (422 aa).

His-59 and His-61 together coordinate Zn(2+). Residues 61–63 (HFR) and Asn-93 contribute to the substrate site. Zn(2+) contacts are provided by Asp-150, His-177, and His-230. Asn-276 is a substrate binding site. Asp-303 is a binding site for Zn(2+). The active site involves Asp-303. His-307 contacts substrate.

Belongs to the metallo-dependent hydrolases superfamily. DHOase family. Class I DHOase subfamily. It depends on Zn(2+) as a cofactor.

It carries out the reaction (S)-dihydroorotate + H2O = N-carbamoyl-L-aspartate + H(+). It functions in the pathway pyrimidine metabolism; UMP biosynthesis via de novo pathway; (S)-dihydroorotate from bicarbonate: step 3/3. In terms of biological role, catalyzes the reversible cyclization of carbamoyl aspartate to dihydroorotate. This Streptococcus thermophilus (strain CNRZ 1066) protein is Dihydroorotase.